The primary structure comprises 478 residues: MTKKQKKKLCQLQLNEIKTSDDPTKLSCSFVIFDFDVSHNNTVISKDVALEAASTIINKPIVAKYYEVDELNTSTDALGTHEAYLDTDKHGELEVKRDTAPIGVFTSEGYITEIETPDGKKEVLAADAILWSSRFKDACELLLEWYGRGININTSCEILYSNYTVQDGIEHLQSPIYFEGHAILNSEKRGEHDIVLPAYDSSKLLSFNELQRFERLVAQAATRQNNEEGEKMNKFRKVFELSHSDVRTLLYSQLDPTLDKESDSFIADVYDTYFIVNVYSWSDENSYDKYFKFNYTRTGDTVSIDFDSKTEVFMTRNWEEVVPEPIQSQLNQKDEQIKDLTKQVNQINKDKVGIEQQFNTASEKLVQLNSEVEQLKPYKEKHEKTLLEQKLSEKNEFYKAKFEALNAEEKFSTEEVQNLIHASVKQDEEGEKAVLQLNTMLVDLVSVPTETNTTIREFSSKRENLIPNDDSFESRFSQ.

Residues 326–419 are a coiled coil; sequence IQSQLNQKDE…KFSTEEVQNL (94 aa).

This Bacillus subtilis (strain 168) protein is SPbeta prophage-derived uncharacterized protein YonD (yonD).